Reading from the N-terminus, the 185-residue chain is Threonylcarbamoyl-AMP synthase (185 aa).

One can recognise a YrdC-like domain in the interval 4–185; the sequence is SWRVQQAAQD…IATGQVMRAG (182 aa).

The protein belongs to the SUA5 family. TsaC subfamily.

The protein localises to the cytoplasm. It carries out the reaction L-threonine + hydrogencarbonate + ATP = L-threonylcarbamoyladenylate + diphosphate + H2O. Its function is as follows. Required for the formation of a threonylcarbamoyl group on adenosine at position 37 (t(6)A37) in tRNAs that read codons beginning with adenine. Catalyzes the conversion of L-threonine, HCO(3)(-)/CO(2) and ATP to give threonylcarbamoyl-AMP (TC-AMP) as the acyladenylate intermediate, with the release of diphosphate. The chain is Threonylcarbamoyl-AMP synthase from Pseudomonas savastanoi pv. phaseolicola (strain 1448A / Race 6) (Pseudomonas syringae pv. phaseolicola (strain 1448A / Race 6)).